A 1076-amino-acid polypeptide reads, in one-letter code: MDPEALNLEFYDKNGLDNPIHFRCDPKRIGMTLPSPDFSVDDVLELVGGNRMIEVVQVQNQGSVKMSLQEFINFYKTPQEKREVLYNVLSLEFSQTPLEDLVKSPELVRQIDWVGNQWPDALRQRWISFNGRDKKFYNPHHTFPKVQNYCLMSVANCYTDFHIDFSGTSVWYHVLKGRKVFWLIPPTETNFFIYQEFIKTVNDNAFFGKSVEKCHVAILEPGDTMLIPSGWIHAVYTPDDSLVFGGNFLHSQSCKTQLRVYQVENKLNITRKFRLPYNEELIFYVIADYVKQWTGREYVRPLRIEDAKYDYVGDKWKTAGGHHKKIEYSDYETGVELTNDMIKGDEESTKDEVKVIAMHAENSLFGYPMVSKATFSADTGLEEEADEDEVKYQETKEEMDARRDAEIDELANSNSLIFYKNRTHDFVRNKCVPDHKLPIGHEPPIYFNDDEISRISPRLLDELETLGTYIRRKARVEVAEGICQPASLINTFQTVLKKRRSELTGKKFEFNQIMPRRYTRSTMETGEYDFQPTQEVPQESARRSTRFKVDNFPDELLESEVTDKPIILPQQPSSGPLEYLPAPKDEIKEDINGFEEEFEEEYEGIGQRDDQEEEEYDAEEPEDQEEEEEDEYQAEEYTPTPVTRRSSSRRSGAKNDESEEVSVKKDKKEKMEKVEKDEKRRNSKSKKDKISKEKKKKERERIELESQLDAELRAAHGGGSSKSKKKKPEKPAFVGGLPTSSIQIDPVVSNPYNYDPRMEMMKLGTGQLKSAYRKTKNNVELHIEKNLYKIEPKRGSEEGSQSREQSMEPEHSTPVFTTFDDINEANNDHYDGQKPPTKRAKYEAISVDTYETPSSSRNKEHKEYRPSPNAAPTPSPSHHQKPKLSSPAMVSSTNEYQLRKHMSSERRSSDAGSAMKKGVYMPAMSRQDKMIAEGASAPSSRHSSISSERRPSFIPDFNSSRNSSIDTPYTPTTVTPSRSSWLPNTSSINRHSIEDDSPIDVVNDSLSPINIASSPTYPTAITPPPVTLSDLKKDMSNGRKSHSQHHDDGHKHKIPSKEAIAELKLLVGKLKAINDS.

Positions 93-265 (FSQTPLEDLV…TQLRVYQVEN (173 aa)) constitute a JmjC domain. T159 serves as a coordination point for substrate. The Fe cation site is built by H162 and D164. K179 provides a ligand contact to substrate. H233 lines the Fe cation pocket. 2 disordered regions span residues 598–748 (FEEE…DPVV) and 789–1056 (KIEP…KIPS). Residues 610-634 (DQEEEEYDAEEPEDQEEEEEDEYQA) are compositionally biased toward acidic residues. Over residues 653–680 (AKNDESEEVSVKKDKKEKMEKVEKDEKR) the composition is skewed to basic and acidic residues. Basic residues predominate over residues 681 to 698 (RNSKSKKDKISKEKKKKE). Composition is skewed to basic and acidic residues over residues 699–714 (RERIELESQLDAELRA) and 789–811 (KIEPKRGSEEGSQSREQSMEPEH). Low complexity predominate over residues 935-946 (ASAPSSRHSSIS). Composition is skewed to polar residues over residues 957 to 990 (FNSSRNSSIDTPYTPTTVTPSRSSWLPNTSSINR) and 1004 to 1019 (DSLSPINIASSPTYPT). Residues 1044–1056 (QHHDDGHKHKIPS) show a composition bias toward basic and acidic residues.

This sequence belongs to the JHDM1 histone demethylase family. Requires Fe(2+) as cofactor.

It localises to the nucleus. It carries out the reaction N(6),N(6)-dimethyl-L-lysyl(36)-[histone H3] + 2 2-oxoglutarate + 2 O2 = L-lysyl(36)-[histone H3] + 2 formaldehyde + 2 succinate + 2 CO2. Functionally, histone demethylase that specifically demethylates 'Lys-36' of histone H3, thereby playing a central role in histone code. Has a role in regulating lifespan. The sequence is that of JmjC domain-containing histone demethylation protein 1 (jhdm-1) from Caenorhabditis elegans.